The following is an 859-amino-acid chain: DNA mismatch repair protein MutS (859 aa).

618–625 (GPNMGGKS) serves as a coordination point for ATP.

Belongs to the DNA mismatch repair MutS family.

Its function is as follows. This protein is involved in the repair of mismatches in DNA. It is possible that it carries out the mismatch recognition step. This protein has a weak ATPase activity. The protein is DNA mismatch repair protein MutS of Shewanella halifaxensis (strain HAW-EB4).